Reading from the N-terminus, the 402-residue chain is Argininosuccinate synthase (402 aa).

8 to 16 (AYSGGLDTS) serves as a coordination point for ATP. The L-citrulline site is built by Tyr-86 and Ser-91. Residue Gly-116 participates in ATP binding. Thr-118, Asn-122, and Asp-123 together coordinate L-aspartate. Residue Asn-122 participates in L-citrulline binding. The L-citrulline site is built by Arg-126, Ser-175, Ser-184, Glu-260, and Tyr-272.

It belongs to the argininosuccinate synthase family. Type 1 subfamily. Homotetramer.

The protein localises to the cytoplasm. It carries out the reaction L-citrulline + L-aspartate + ATP = 2-(N(omega)-L-arginino)succinate + AMP + diphosphate + H(+). It participates in amino-acid biosynthesis; L-arginine biosynthesis; L-arginine from L-ornithine and carbamoyl phosphate: step 2/3. The polypeptide is Argininosuccinate synthase (Clostridium novyi (strain NT)).